Here is a 204-residue protein sequence, read N- to C-terminus: Dual-action ribosomal maturation protein DarP (204 aa).

Disordered regions lie at residues 1–31 (MPPM…SKSQ) and 182–204 (GGAS…DDEA). The span at 186 to 204 (DSDDEAADDAGDDHDDDEA) shows a compositional bias: acidic residues.

Belongs to the DarP family.

The protein localises to the cytoplasm. Functionally, member of a network of 50S ribosomal subunit biogenesis factors which assembles along the 30S-50S interface, preventing incorrect 23S rRNA structures from forming. Promotes peptidyl transferase center (PTC) maturation. This Burkholderia orbicola (strain MC0-3) protein is Dual-action ribosomal maturation protein DarP.